Reading from the N-terminus, the 291-residue chain is Dihydroorotate dehydrogenase A (fumarate) (291 aa).

FMN-binding positions include serine 18 and lysine 42–serine 43. Residues lysine 42, asparagine 66–leucine 70, and asparagine 126 each bind substrate. Asparagine 126 is a binding site for FMN. Cysteine 129 functions as the Nucleophile in the catalytic mechanism. FMN contacts are provided by lysine 164 and isoleucine 190. Asparagine 191–threonine 192 provides a ligand contact to substrate. FMN contacts are provided by residues glycine 216, glycine 242–glycine 243, and glycine 264–serine 265.

Belongs to the dihydroorotate dehydrogenase family. Type 1 subfamily. Homodimer. FMN is required as a cofactor.

The protein localises to the cytoplasm. The catalysed reaction is (S)-dihydroorotate + fumarate = orotate + succinate. It functions in the pathway pyrimidine metabolism; UMP biosynthesis via de novo pathway. In terms of biological role, catalyzes the conversion of dihydroorotate to orotate with fumarate as the electron acceptor. This is Dihydroorotate dehydrogenase A (fumarate) (pyrD) from Lacticaseibacillus paracasei (strain ATCC 334 / BCRC 17002 / CCUG 31169 / CIP 107868 / KCTC 3260 / NRRL B-441) (Lactobacillus paracasei).